Consider the following 633-residue polypeptide: Biosynthetic arginine decarboxylase (633 aa).

The residue at position 101 (Lys101) is an N6-(pyridoxal phosphate)lysine. Residue 284–294 (VDVGGGLGVDY) participates in substrate binding.

It belongs to the Orn/Lys/Arg decarboxylase class-II family. SpeA subfamily. The cofactor is Mg(2+). Pyridoxal 5'-phosphate is required as a cofactor.

The catalysed reaction is L-arginine + H(+) = agmatine + CO2. Its pathway is amine and polyamine biosynthesis; agmatine biosynthesis; agmatine from L-arginine: step 1/1. Functionally, catalyzes the biosynthesis of agmatine from arginine. This chain is Biosynthetic arginine decarboxylase, found in Aeromonas hydrophila subsp. hydrophila (strain ATCC 7966 / DSM 30187 / BCRC 13018 / CCUG 14551 / JCM 1027 / KCTC 2358 / NCIMB 9240 / NCTC 8049).